The primary structure comprises 173 residues: Sporulation-specific protein 12 (173 aa).

Residues 1-12 (MSNKASDQSART) show a composition bias toward polar residues. The segment at 1-56 (MSNKASDQSARTASILKTDITRENTITRSSSSNNDNYHHHNNINNYNESAKTGEDA) is disordered. Position 2 is an N-acetylserine (Ser2). Phosphoserine occurs at positions 118 and 125. Positions 159–173 (DSEDVEIDEDEEYFY) are negative-charged tail.

Its function is as follows. It is required for meiosis I chromosome division during sporulation. A component of the FEAR (CDC14 early anaphase release) network which promotes CDC14 release from the nucleolus during early anaphase. This chain is Sporulation-specific protein 12 (SPO12), found in Saccharomyces cerevisiae (strain ATCC 204508 / S288c) (Baker's yeast).